A 441-amino-acid chain; its full sequence is DNA double-strand break repair protein Mre11 (441 aa).

The Mn(2+) site is built by Asp-9, His-11, Asp-50, and Asn-85. The Proton donor role is filled by His-86. Residues His-150, Asp-181, and His-183 each contribute to the Mn(2+) site. A disordered region spans residues 360–441; it reads ESLLSDDPDA…SRDSSLGDFA (82 aa). 2 stretches are compositionally biased toward acidic residues: residues 379–403 and 411–425; these read AEAE…EDTA and TDTD…DSET.

The protein belongs to the MRE11/RAD32 family. In terms of assembly, homodimer. Forms a heterotetramer composed of two Mre11 subunits and two Rad50 subunits. Mn(2+) is required as a cofactor.

Its activity is regulated as follows. Nuclease activity is regulated by Rad50. Functionally, part of the Rad50/Mre11 complex, which is involved in the early steps of DNA double-strand break (DSB) repair. Mre11 binds to DSB ends and has both double-stranded 3'-5' exonuclease activity and single-stranded endonuclease activity. In polyploid organisms, the Rad50/Mre11 complex appears to restrain the repair of double-strand breaks by homologous recombination, allowing another pathway to act as the primary mode of repair. This is DNA double-strand break repair protein Mre11 from Haloferax volcanii (strain ATCC 29605 / DSM 3757 / JCM 8879 / NBRC 14742 / NCIMB 2012 / VKM B-1768 / DS2) (Halobacterium volcanii).